Reading from the N-terminus, the 460-residue chain is NADH-quinone oxidoreductase subunit N (460 aa).

The next 13 membrane-spanning stretches (helical) occupy residues 2-22, 28-48, 65-85, 104-124, 155-175, 196-216, 230-250, 263-283, 292-312, 321-341, 363-383, 400-420, and 438-458; these read LLPE…AVML, IVAN…LKYS, ANIA…MIIY, ILLS…LLLF, FILG…IYGF, LGLV…LSSA, PIAS…AILL, ISYN…ALGA, LMAY…LLRT, LYML…IMLL, IAAA…LAGF, LLAY…LKII, and YGLL…SFII.

This sequence belongs to the complex I subunit 2 family. NDH-1 is composed of 14 different subunits. Subunits NuoA, H, J, K, L, M, N constitute the membrane sector of the complex.

Its subcellular location is the cell inner membrane. The enzyme catalyses a quinone + NADH + 5 H(+)(in) = a quinol + NAD(+) + 4 H(+)(out). Functionally, NDH-1 shuttles electrons from NADH, via FMN and iron-sulfur (Fe-S) centers, to quinones in the respiratory chain. The immediate electron acceptor for the enzyme in this species is believed to be ubiquinone. Couples the redox reaction to proton translocation (for every two electrons transferred, four hydrogen ions are translocated across the cytoplasmic membrane), and thus conserves the redox energy in a proton gradient. This chain is NADH-quinone oxidoreductase subunit N, found in Rickettsia bellii (strain RML369-C).